Consider the following 1068-residue polypeptide: DNA-directed RNA polymerase subunit beta (1068 aa).

Belongs to the RNA polymerase beta chain family. In plastids the minimal PEP RNA polymerase catalytic core is composed of four subunits: alpha, beta, beta', and beta''. When a (nuclear-encoded) sigma factor is associated with the core the holoenzyme is formed, which can initiate transcription.

The protein localises to the plastid. The protein resides in the chloroplast. The catalysed reaction is RNA(n) + a ribonucleoside 5'-triphosphate = RNA(n+1) + diphosphate. DNA-dependent RNA polymerase catalyzes the transcription of DNA into RNA using the four ribonucleoside triphosphates as substrates. The polypeptide is DNA-directed RNA polymerase subunit beta (Staurastrum punctulatum (Green alga)).